Here is a 500-residue protein sequence, read N- to C-terminus: Lysine--tRNA ligase (500 aa).

Positions 410 and 417 each coordinate Mg(2+).

The protein belongs to the class-II aminoacyl-tRNA synthetase family. As to quaternary structure, homodimer. Requires Mg(2+) as cofactor.

The protein resides in the cytoplasm. The enzyme catalyses tRNA(Lys) + L-lysine + ATP = L-lysyl-tRNA(Lys) + AMP + diphosphate. This chain is Lysine--tRNA ligase, found in Pseudomonas syringae pv. syringae (strain B728a).